A 658-amino-acid chain; its full sequence is Zinc finger protein 135 (658 aa).

Residues 14-85 enclose the KRAB domain; that stretch reads VTFEDVVVGF…ESRLPQGVYP (72 aa). A disordered region spans residues 171-196; sequence LNPDLPHQPMTPERQSPHTWGTRGKR. 16 consecutive C2H2-type zinc fingers follow at residues 214-236, 242-264, 270-292, 298-320, 326-348, 354-376, 382-404, 410-432, 438-460, 466-488, 494-516, 522-544, 550-572, 578-600, 606-628, and 634-656; these read YKCQ…HRTH, YECH…QRIH, YKCT…QRTH, YECS…ERTH, YECS…LRIH, YQCG…QRIH, YECH…QRTH, YECG…RRIH, YGCN…ERTH, YECS…QRIH, YECN…QRIH, YECH…RRIH, and YACR…QRTH.

The protein belongs to the krueppel C2H2-type zinc-finger protein family.

It localises to the nucleus. Plays a role in the regulation of cell morphology and cytoskeletal organization. May be involved in transcriptional regulation. This is Zinc finger protein 135 (ZNF135) from Homo sapiens (Human).